A 322-amino-acid polypeptide reads, in one-letter code: MEKQYRVLLYYKYVPIEDPEAFREQHLAFCKELGLLGRILVSSEGINGTVSGTVEQTEKYMETMKADPRFADMVFKIDEAEGHAFKKIFVRHKKELVTLRLEDDVDPNETTGQHLKPAEFYEKMQDPNTIVIDARNDYEYDLGHFRGAVRPDIEAFRELPEWIEEHKDMLEGKKILTYCTGGVRCEKFSGWLVKQGFEDVAQLDGGIVTYGKDPEVQGKLWDGQCYVFDERISVPVNRVEHVIVGKDYFTGEPCERYVNCANPSCNKKMICTPENEYKYMRSCSHECRTNPRNLYVKEHNMTEEEVNARLAAIETEDHAAAE.

A Rhodanese domain is found at 125-219; it reads QDPNTIVIDA…YGKDPEVQGK (95 aa). C179 acts as the Cysteine persulfide intermediate in catalysis.

It belongs to the TrhO family.

It carries out the reaction uridine(34) in tRNA + AH2 + O2 = 5-hydroxyuridine(34) in tRNA + A + H2O. In terms of biological role, catalyzes oxygen-dependent 5-hydroxyuridine (ho5U) modification at position 34 in tRNAs. This chain is tRNA uridine(34) hydroxylase, found in Bacillus subtilis (strain 168).